The chain runs to 325 residues: MPAALPYNVSRDNKWDIKKIIQDFFKRCDVPYQVIPYDTELWNACLKRAKEKGYPVEPDSPMSLYRSFKVGVVITRTSYGHIQDYEILIWVATFTAFVTYADDAFQEDIQHLHSFARTFLQNEKHEHPVLEAFAQFLRESSIRFSHFVANTVVSSALRFMMSIALEFEGQNVSVSTEAREYPGYIRILSGLSDIYALFAFPMDLPRSTYIQAFPEQIDYINGTNDLLSFYKEELDCETVNFISAAATSQQVSKLEVLRNAAEKAAYSYDVVVNVLKPYPEALAAWKSFARGFCYFHTSSPRYRLGEMFHDFEHDLVCKCASCTEI.

Mg(2+) contacts are provided by D102, E166, N224, S228, and E232.

It belongs to the trichodiene synthase family. Requires Mg(2+) as cofactor.

Functionally, alpha-cuprenene synthase; part of the gene cluster that mediates the biosynthesis of alpha-cuprenene and oxidized derivatives. The alpha-cuprenene synthase COP6 is the only sesquiterpene synthase identified in C.cinereus that appears to be part of a biosynthetic gene cluster and is highly specific since it catalyzes the cyclization of (2E,6E)-farnesyl diphosphate into only one product, alpha-cuprenene. COP6 is also able to perform the cyclization of geranyl diphosphate. The cytochrome P450 monooxygenase COX2 then oxidizes the cyclohexadiene ring of alpha-cuprenene at positions 1 and 4, yielding first alpha-cuparene, followed by alpha-cuparophenol and a further yet unidentified compound resulting from one additional oxidation step. The cytochrome P450 monooxygenase COX1 then likely catalyzes the oxidation at position 9 of the pentane ring of alpha-cuprenene to give the corresponding hydroxy or ketone derivatives. The sequence is that of Alpha-cuprenene synthase COP6 from Coprinopsis cinerea (strain Okayama-7 / 130 / ATCC MYA-4618 / FGSC 9003) (Inky cap fungus).